The sequence spans 427 residues: L-rhamnose isomerase (427 aa).

Residues H264, D296, and D298 each coordinate Mn(2+).

It belongs to the rhamnose isomerase family. Mn(2+) serves as cofactor.

The protein resides in the cytoplasm. The enzyme catalyses L-rhamnopyranose = L-rhamnulose. The protein operates within carbohydrate degradation; L-rhamnose degradation; glycerone phosphate from L-rhamnose: step 1/3. Its function is as follows. Catalyzes the interconversion of L-rhamnose and L-rhamnulose. This Lactiplantibacillus plantarum (strain ATCC BAA-793 / NCIMB 8826 / WCFS1) (Lactobacillus plantarum) protein is L-rhamnose isomerase.